Reading from the N-terminus, the 736-residue chain is Subtilisin-like protease SBT4.6 (736 aa).

The N-terminal stretch at 1–24 is a signal peptide; sequence MATAVSYCLLSCIFALLVVSFASA. Residues 25-111 constitute a propeptide, activation peptide; the sequence is GKDDQDKQVY…VFPSKNLNLQ (87 aa). Residues 33–110 enclose the Inhibitor I9 domain; that stretch reads VYIVYMGALP…SVFPSKNLNL (78 aa). The 475-residue stretch at 115-589 folds into the Peptidase S8 domain; that stretch reads SWNFMGLKEG…AGHVDPIAAI (475 aa). Asp-143 functions as the Charge relay system in the catalytic mechanism. Residue Asn-174 is glycosylated (N-linked (GlcNAc...) asparagine). Catalysis depends on His-204, which acts as the Charge relay system. Residue Asn-227 is glycosylated (N-linked (GlcNAc...) asparagine). The PA domain maps to 362–442; it reads KYPLVYGKSA…PVSVLSEDDY (81 aa). The N-linked (GlcNAc...) asparagine glycan is linked to Asn-450. Ser-527 acts as the Charge relay system in catalysis. 4 N-linked (GlcNAc...) asparagine glycosylation sites follow: Asn-564, Asn-598, Asn-610, and Asn-668.

This sequence belongs to the peptidase S8 family. The C-terminal propeptide is autocleaved.

The protein resides in the secreted. The chain is Subtilisin-like protease SBT4.6 from Arabidopsis thaliana (Mouse-ear cress).